The following is a 360-amino-acid chain: Peptide chain release factor 1 (360 aa).

An N5-methylglutamine modification is found at Q235. Over residues 280-293 (DKQSHEQQAKEAAT) the composition is skewed to basic and acidic residues. Positions 280–300 (DKQSHEQQAKEAATRKSLIGS) are disordered.

Belongs to the prokaryotic/mitochondrial release factor family. Post-translationally, methylated by PrmC. Methylation increases the termination efficiency of RF1.

The protein resides in the cytoplasm. In terms of biological role, peptide chain release factor 1 directs the termination of translation in response to the peptide chain termination codons UAG and UAA. In Paraburkholderia xenovorans (strain LB400), this protein is Peptide chain release factor 1.